We begin with the raw amino-acid sequence, 531 residues long: Tubulin-folding cofactor E (531 aa).

Residues 32–76 form the CAP-Gly domain; that stretch reads GDVEGYSGTWIGVDWDQDGDGKHNGSVNGVFYFNGRSQSSASFVR. LRR repeat units lie at residues 84–109, 159–183, 185–213, 233–256, 260–284, 285–308, 318–342, 344–366, and 474–497; these read ITLL…MYVL, LPNL…ALCE, LPAL…NIRV, LPGI…SSSD, FNSL…KLSQ, LPCL…VNGT, FPSL…ALNG, PQLV…GVPR, and VGKL…LFLQ.

Belongs to the TBCE family. Supercomplex made of cofactors A to E. Cofactors A and D function by capturing and stabilizing tubulin in a quasi-native conformation. Cofactor E binds to the cofactor D-tubulin complex; interaction with cofactor C then causes the release of tubulin polypeptides that are committed to the native state.

It is found in the cytoplasm. In terms of biological role, essential tubulin-folding protein involved in the tubulin folding pathway. Not essential for cell viability. Probably involved in the binding of alpha-tubulin in the multimeric supercomplex. In Arabidopsis thaliana (Mouse-ear cress), this protein is Tubulin-folding cofactor E (TFCE).